The following is a 226-amino-acid chain: 7-cyano-7-deazaguanine synthase (226 aa).

Position 7-17 (7-17 (ISGGMDSLVVA)) interacts with ATP. Positions 187, 195, 198, and 201 each coordinate Zn(2+).

The protein belongs to the QueC family. Zn(2+) is required as a cofactor.

The enzyme catalyses 7-carboxy-7-deazaguanine + NH4(+) + ATP = 7-cyano-7-deazaguanine + ADP + phosphate + H2O + H(+). Its pathway is purine metabolism; 7-cyano-7-deazaguanine biosynthesis. In terms of biological role, catalyzes the ATP-dependent conversion of 7-carboxy-7-deazaguanine (CDG) to 7-cyano-7-deazaguanine (preQ(0)). In Chlorobium phaeobacteroides (strain BS1), this protein is 7-cyano-7-deazaguanine synthase.